Consider the following 389-residue polypeptide: MSTKPFYRDTWAEIDLSAIKENVSNMKKHIGEHVHLMAVVKANAYGHGDAETAKAALDAGASCLAVAILDEAISLRKKGLKAPILVLGAVPPEYVAIAAEYDVTLTGYSVEWLQEAARHTKKGSLHFHLKVDTGMNRLGVKTEEEVQNVMAILDRNPRLKCKGVFTHFATADEKERGYFLMQFERFKELIAPLPLKNLMVHCANSAAGLRLKKGFFNAVRFGIGMYGLRPSADMSDEIPFQLRPAFTLHSTLSHVKLIRKGESVSYGAEYTAEKDTWIGTVPVGYADGWLRKLKGTDILVKGKRLKIAGRICMDQFMVELDQEYPPGTKVTLIGRQGDEYISMDEIAGRLETINYEVACTISSRVPRMFLENGSIMEVRNPLLQVNISN.

Lys41 serves as the catalytic Proton acceptor; specific for D-alanine. The residue at position 41 (Lys41) is an N6-(pyridoxal phosphate)lysine. Arg137 contacts substrate. Tyr266 serves as the catalytic Proton acceptor; specific for L-alanine. Position 313 (Met313) interacts with substrate.

Belongs to the alanine racemase family. Requires pyridoxal 5'-phosphate as cofactor.

It carries out the reaction L-alanine = D-alanine. It participates in amino-acid biosynthesis; D-alanine biosynthesis; D-alanine from L-alanine: step 1/1. Catalyzes the interconversion of L-alanine and D-alanine. May also act on other amino acids. The protein is Alanine racemase 1 (alr1) of Bacillus subtilis (strain 168).